A 910-amino-acid chain; its full sequence is Putative disease resistance protein At1g58400 (910 aa).

Residues 15–57 (DRLTQEYEQFQGVEDRIAELKSNLNLLKSFLKDAEAKKNTSQM) adopt a coiled-coil conformation. The 313-residue stretch at 148–460 (REREMRQTFS…AEGILEPRHY (313 aa)) folds into the NB-ARC domain. 191 to 198 (GMGGLGKT) is a binding site for ATP. LRR repeat units follow at residues 580–604 (LELL…GIGK) and 605–628 (LIHL…LGNL).

The protein belongs to the disease resistance NB-LRR family.

Its function is as follows. Potential disease resistance protein. The polypeptide is Putative disease resistance protein At1g58400 (Arabidopsis thaliana (Mouse-ear cress)).